Reading from the N-terminus, the 1001-residue chain is Serine/threonine-protein kinase TAO1-B (1001 aa).

One can recognise a Protein kinase domain in the interval F28–V281. ATP is bound by residues I34–V42 and K57. Catalysis depends on D151, which acts as the Proton acceptor. Disordered regions lie at residues P324–R435 and K567–S586. Residues S350–S370 show a composition bias toward low complexity. 2 stretches are compositionally biased toward basic and acidic residues: residues S375–H388 and P577–S586. 2 coiled-coil regions span residues S458 to M651 and K754 to A877. The interval S911–T1001 is disordered. Over residues H921–P930 the composition is skewed to low complexity. 2 stretches are compositionally biased toward polar residues: residues G949–Q967 and G975–T1001.

It belongs to the protein kinase superfamily. STE Ser/Thr protein kinase family. STE20 subfamily.

The protein localises to the cytoplasm. The enzyme catalyses L-seryl-[protein] + ATP = O-phospho-L-seryl-[protein] + ADP + H(+). The catalysed reaction is L-threonyl-[protein] + ATP = O-phospho-L-threonyl-[protein] + ADP + H(+). Its function is as follows. Serine/threonine-protein kinase involved in various processes such as p38/mapk14 stress-activated MAPK cascade, DNA damage response and regulation of cytoskeleton stability. Acts as an activator of the p38/MAPK14 stress-activated MAPK cascade by mediating phosphorylation and subsequent activation of upstream MAP kinase kinases. In response to DNA damage, involved in the G2/M transition DNA damage checkpoint by activating the p38/MAPK14 stress-activated MAPK cascade. This Xenopus laevis (African clawed frog) protein is Serine/threonine-protein kinase TAO1-B (taok1-b).